Here is a 448-residue protein sequence, read N- to C-terminus: Mitochondrial distribution and morphology protein 10 (448 aa).

Disordered stretches follow at residues 101–126 (QIHP…SEKA) and 366–386 (PPLP…PAGE). Over residues 112-126 (NESRHAEPNERSEKA) the composition is skewed to basic and acidic residues.

Belongs to the MDM10 family. In terms of assembly, component of the ER-mitochondria encounter structure (ERMES) or MDM complex, composed of MMM1, MDM10, MDM12 and MDM34. Associates with the mitochondrial outer membrane sorting assembly machinery SAM(core) complex.

The protein localises to the mitochondrion outer membrane. Functionally, component of the ERMES/MDM complex, which serves as a molecular tether to connect the endoplasmic reticulum and mitochondria. Components of this complex are involved in the control of mitochondrial shape and protein biogenesis and may function in phospholipid exchange. MDM10 is involved in the late assembly steps of the general translocase of the mitochondrial outer membrane (TOM complex). Functions in the TOM40-specific route of the assembly of outer membrane beta-barrel proteins, including the association of TOM40 with the receptor TOM22 and small TOM proteins. Can associate with the SAM(core) complex as well as the MDM12-MMM1 complex, both involved in late steps of the major beta-barrel assembly pathway, that is responsible for biogenesis of all outer membrane beta-barrel proteins. May act as a switch that shuttles between both complexes and channels precursor proteins into the TOM40-specific pathway. Plays a role in mitochondrial morphology and in the inheritance of mitochondria. The chain is Mitochondrial distribution and morphology protein 10 from Coccidioides immitis (strain RS) (Valley fever fungus).